Here is a 115-residue protein sequence, read N- to C-terminus: NADH-ubiquinone oxidoreductase chain 3 (115 aa).

3 helical membrane-spanning segments follow: residues 3 to 23 (LLLTLLTNTTLALLLVFIAFW), 55 to 75 (FFLVAITFLLFDLEIALLLPL), and 84 to 104 (LNTMLTMALFLISLLAASLAY).

Belongs to the complex I subunit 3 family. Core subunit of respiratory chain NADH dehydrogenase (Complex I) which is composed of 45 different subunits. Interacts with TMEM186. Interacts with TMEM242.

It localises to the mitochondrion inner membrane. It catalyses the reaction a ubiquinone + NADH + 5 H(+)(in) = a ubiquinol + NAD(+) + 4 H(+)(out). Functionally, core subunit of the mitochondrial membrane respiratory chain NADH dehydrogenase (Complex I) which catalyzes electron transfer from NADH through the respiratory chain, using ubiquinone as an electron acceptor. Essential for the catalytic activity of complex I. The chain is NADH-ubiquinone oxidoreductase chain 3 from Balaenoptera musculus (Blue whale).